The primary structure comprises 130 residues: Small ribosomal subunit protein uS9 (130 aa).

Residues 107–130 (DSREVERKKVGLRKARRRPQFSKR) form a disordered region. Over residues 116-130 (VGLRKARRRPQFSKR) the composition is skewed to basic residues.

The protein belongs to the universal ribosomal protein uS9 family.

This is Small ribosomal subunit protein uS9 from Marinomonas sp. (strain MWYL1).